Reading from the N-terminus, the 329-residue chain is Probable allantoicase (329 aa).

The protein belongs to the allantoicase family.

It catalyses the reaction allantoate + H2O = (S)-ureidoglycolate + urea. Its pathway is nitrogen metabolism; (S)-allantoin degradation; (S)-ureidoglycolate from allantoate (aminidohydrolase route): step 1/1. In Nocardia farcinica (strain IFM 10152), this protein is Probable allantoicase.